We begin with the raw amino-acid sequence, 455 residues long: Protein U54 (455 aa).

The protein belongs to the herpesviridae UL82 family.

The protein is Protein U54 (U54) of Homo sapiens (Human).